A 2623-amino-acid chain; its full sequence is MTQNIDNNNNKLIRDRNDDDDVDRNDDGDVAVIGIGLRFPSGNLKESISKPNQLFNELLNGLDGIVSTSERWSDNYYLNGEIVSKFAGLLPLDEWKQFDPIFFAINQTYDNVSSIDPQQRLLLKCVWEALEDSGIDPISLRGTNTSTFIGNSTIDYYNLQRSPSETQNNIFGSSTHSIANRIGYCFDFRGENLTIDTACSSSSNAINCGYNSIKTNRSNVSIVGGVNIILDPHISKSFTQLDMLSPTGKCHTFSSDADGFVRSEGVGIVVLKKLKDAIKDSNNIYCVIKGSSSNIDGNFDKLNFYSPSKSSQCENIKLAIKSTNGQINESDIDYCETHGTGTPTGDPIELEGISRVFNSAKIPSTTINNNKQVLVGSIKSNIGHLEACSGVASLIKCCLMFKNKLFLQNINFKEPNPLINFKEWGLKVVTEPIKFNENKSTVMLVNNFGITGSNVCLILSELKKNHHNRYENEYHKIEIDSKVNEKKKYLIPLSSNSSTSLNNYKSSIIKLSNSNSSPTTTTSFKELVHNQIKFKSTSLIQKSVIIASDWNEFQDENNQIKLENSDNLISNITVEKKKSPITVMVLCGQGSQYNKMALSLYDNEPIFRESVNRFDKELFKYYGYSVLDKLRSIDDKDLISIHQPILAQPANVIIQVSLYELYKHWGVSADIIIGHSLGEVSSPYCSGMIDFQTLCYLIYHRSVAQNRTTGTGRMLSVNISSDEFINNYQSTTKYESLEIACYNSPTSIVIAGREDLLNEITNEFKSNNIFCTMLGLLSSFHTSSQQMIKDEVCSLNISSKQPSIAVFSTVTTNLFNHQSLPFNADYAFENIRQPVRFTQTITNLYKHIESNDMGNEITFIEVSPHPTLQYYLNQMKSTQSSYFNNGKNITIYSPLNKKKNDYNEFLKTISLLYVNNNFDINFKSQLINDNNNISNTTKLNNLPLYQWDDKEYFKIASFHEKIKSEGPSIHSLGNNTDSPYPSYQTFIDIKKSPFQWLKGHQVSDKFYYPGMGYVHNLLSIYPNQDITISSLEFKSPLVLTEGNNQCLQTTIAPLSKNEFNIKSHYKDQKTNQWILSSLGNFNLTKHNSIISNKLINIQSLKDKCNFTSISKQDFYETIRIKTNLTYKGLFQGVKQCYIGNNCSLSIVSLNEIYNQKEYNHLINNSNMNKFLNTAILDTCLHGSLVAVTQPVVLDRIEGFKYYFSNIPSLNENNNNDDIKELYVFSDIKPRTNYQTYSISVKIILPNGTLLVDISNVVCALVSLGSNPDSTIICKPPLNDIYTPYLQSKDSVVNKPEQFKHLYSVDEFSVNEEDNQFISNELLLSLFYKHINNRCPSINLESLTTLEYNQFKQLYYNSLVNENLFKFIFENLKRYSNILNHDNNQSNIKPKIEKIFIRTTKIMAKQLFPLKDDDSITDTPQSLFESGFLDDFYKNSRVVQPLNNLLSEIIVETLKPILNEPIVFRILEAGGGTGSLSLLILEKICKLLNDNSTTSIINIEFTWSDVSASFFAEIKEKFSSFTNHNNLNIIYRVLDLEKPLLDQDLKASYYDFVVMSNVMHVVKKLKPTLNEIHNILTPNGQLLYIEPPYKSFYFDSIFGCFSQWWPSSDGDIELRPDRCCMKQEKWVNLLSQCNYRDTIMSGNDNLLFLIQTRKPTINEIISEQSISLDQLNSFNNIILFSNNKNRNSCSSSILDLIRLNQELKHKIININNYNEFQSWITNNQNKDNCNKSLIIFLKSIESTMNTSNFKEITFEYIQINQLILKLELSNNFKHLLLSLNSTTDNYLSSSIIGAARYFVEFPQLDLYILNYDNVSIENNQQLSLINYLINPNNNIQKEFTINNNKVYYERYCRRSNNIKSKFQSESFETNKDNLYIQLNSNIEYQLYSKKDELNSNEVEIEVKATGINYKDYLMYIGMIGSDLDIKYGKEIEYGIGIDNPKIGNDFSGIITRLGSNVKKFKVGDQVCGFGSKTNSSHVIIDFNSIYYKPLNCSHSVSASIPSIYITTLHSIYSIGNLKSNESILIHSAAGGIGISSLDLLKSKQHQGYIFLTVGSKDKEEYLINKYGSLITAIYSSRNKDYVYEIKNKLIELGVVEQHQQGVDLILNTLSSEYMDSNFQCLNLSGRIVDLSITHLTPNDYMTNNHYKFNMNYGNVDIEDFPSKLIKRYLKKIIKMINSNKLELSVPIIEYSNNQFKDAIEYINQRKHIGKIIVNHNQDEFNRVYNNYQSNNNQIIMKHSYDISKLNIGKNILLTGQTGIVLEILKYLIKYSNHSIENIIILSKSKLKWELKLLINQSKFKKDNNIKFHFNQIDIEDSNKVNQVLNQLELNENITNIDSIIHFAFMIDIGDVQQVDMNRLNNAHGAKTIGAINLHNQSINRSWNIKQFIMASSVVSIFGSDQQCCYVSACSVIDSLSKYRHSIGLPSLAINLGAISSTGFVSRNNAIETMFKSSIVNLFSPQLVISSLDLFIQNQHQYPNYCLSDFNFEVLTPTLTNQYHSKFDYQINIVKKSNRIKSFSSGNSGANNEIIHSTILNKISELLSIDESKINEDLQLSQYGMDSLVIVQLKNFIDNQLGHNIITIQQLQNNKINQSIEIIKSAKNNNKNNNNNNNKNNSNNKNKNN.

The span at 1–11 (MTQNIDNNNNK) shows a compositional bias: low complexity. The tract at residues 1 to 25 (MTQNIDNNNNKLIRDRNDDDDVDRN) is disordered. The 435-residue stretch at 27–461 (DGDVAVIGIG…GSNVCLILSE (435 aa)) folds into the Ketosynthase family 3 (KS3) domain. Residues C199, H338, and H384 each act as for beta-ketoacyl synthase activity in the active site. An acyl/malonyl transferase region spans residues 666 to 699 (GVSADIIIGHSLGEVSSPYCSGMIDFQTLCYLIY). The active-site For acyl/malonyl transferase activity is S676. The interval 959–1088 (HEKIKSEGPS…GNFNLTKHNS (130 aa)) is N-terminal hotdog fold. The region spanning 959–1267 (HEKIKSEGPS…CALVSLGSNP (309 aa)) is the PKS/mFAS DH domain. The active-site Proton acceptor; for dehydratase activity is H1000. The interval 1105 to 1267 (NFTSISKQDF…CALVSLGSNP (163 aa)) is C-terminal hotdog fold. The Proton donor; for dehydratase activity role is filled by D1177. The region spanning 2524–2601 (ANNEIIHSTI…QSIEIIKSAK (78 aa)) is the Carrier domain. Residue S2561 is modified to O-(pantetheine 4'-phosphoryl)serine. The tract at residues 2600 to 2623 (AKNNNKNNNNNNNKNNSNNKNKNN) is disordered. The segment covering 2601–2623 (KNNNKNNNNNNNKNNSNNKNKNN) has biased composition (low complexity).

Pantetheine 4'-phosphate is required as a cofactor.

Functionally, probable polyketide synthase. The polypeptide is Probable polyketide synthase 31 (pks31) (Dictyostelium discoideum (Social amoeba)).